Reading from the N-terminus, the 233-residue chain is Large ribosomal subunit protein uL2 (233 aa).

The segment at 195 to 233 (PHGGGNHQHVGRPSTVGRNAPPGRKVGRLSPKRRRVNGR) is disordered. A compositionally biased stretch (basic residues) spans 219–233 (KVGRLSPKRRRVNGR).

It belongs to the universal ribosomal protein uL2 family. As to quaternary structure, part of the 50S ribosomal subunit. Forms a bridge to the 30S subunit in the 70S ribosome.

One of the primary rRNA binding proteins. Required for association of the 30S and 50S subunits to form the 70S ribosome, for tRNA binding and peptide bond formation. It has been suggested to have peptidyltransferase activity; this is somewhat controversial. Makes several contacts with the 16S rRNA in the 70S ribosome. This Thermoplasma acidophilum (strain ATCC 25905 / DSM 1728 / JCM 9062 / NBRC 15155 / AMRC-C165) protein is Large ribosomal subunit protein uL2.